We begin with the raw amino-acid sequence, 452 residues long: MKQTFRFIKPIERITHLKPNATMMLFLASVLAVIMANSSLSTIYHEILEYPINLTIGGHEVFSHHGETMTLLQFVNDVLMVIFFLAVGLEIKQEILVGELSSFKKAMLPIVGAIGGMIVPVLFFLLVVHEGPGARGAAIPMSTDIAFALAALAVLGSRVPASLKVFLTALAVADDIGGIIVIALFYSSHINIGMLAIAFGILFIMYLMGRMHVSNLGLYFVCTFFVWLFFLQSGIHTTIAGVLAAFMIPARPGLHAKNLRAEMRSLFEAMPNDKIRQSGSSLILSHNQINVINSMRKIARKAISPMQLMEEYLSPIVGYFVLPLFAFANAGITLGGVTADALWGVPMAVFLGLFVGKPLGIYFFTYGFVKMRLCPWPEGMSRLNLMAVSLFGGIGFTVSLFIATLSYAGAEHLLFLNEAKLGIFVASIFAAVVGIVTLRYELNLENAKAQKS.

Transmembrane regions (helical) follow at residues 23 to 43 (MMLF…LSTI), 71 to 91 (LLQF…GLEI), 108 to 128 (LPIV…LLVV), 136 to 156 (GAAI…AVLG), 165 to 185 (VFLT…IALF), 189 to 209 (HINI…YLMG), 216 to 236 (LGLY…SGIH), 316 to 336 (IVGY…TLGG), 349 to 369 (VFLG…YGFV), 385 to 405 (LMAV…IATL), and 418 to 438 (EAKL…IVTL).

Belongs to the NhaA Na(+)/H(+) (TC 2.A.33) antiporter family.

It is found in the cell inner membrane. It catalyses the reaction Na(+)(in) + 2 H(+)(out) = Na(+)(out) + 2 H(+)(in). In terms of biological role, na(+)/H(+) antiporter that extrudes sodium in exchange for external protons. The sequence is that of Na(+)/H(+) antiporter NhaA from Porphyromonas gingivalis (strain ATCC 33277 / DSM 20709 / CIP 103683 / JCM 12257 / NCTC 11834 / 2561).